Reading from the N-terminus, the 422-residue chain is MLKLIVKNGYVIDPSQNLEGEFDILVENGKIKKIDKNILVPEAEIIDAKGLIVCPGFIDIHVHLRDPGQTYKEDIESGSRCAVAGGFTTIVCMPNTNPPIDNTTVVNYILQKSKSVGLCRVLPTGTITKGRKGKEIADFYSLKEAGCVAFTDDGSPVMDSSVMRKALELASQLGVPIMDHCEDDKLAYGVINEGEVSALLGLSSRAPEAEEIQIARDGILAQRTGGHVHIQHVSTKLSLEIIEFFKEKGVKITCEVNPNHLLFTEREVLNSGANARVNPPLRKKEDRLALIEGVKRGIIDCFATDHAPHQTFEKELVEFAMPGIIGLQTALPSALELYRKGIISLKKLIEMFTINPARIIGVDLGTLKLGSPADITIFDPNKEWILNEETNLSKSRNTPLWGKVLKGKVIYTIKDGKMVYKD.

Residues histidine 61 and histidine 63 each contribute to the Zn(2+) site. Substrate contacts are provided by residues 63–65 and asparagine 95; that span reads HLR. Aspartate 153 contributes to the Zn(2+) binding site. Substrate is bound at residue asparagine 278. Position 305 (aspartate 305) interacts with Zn(2+). Residue aspartate 305 is part of the active site. Substrate-binding positions include histidine 309 and 322-323; that span reads PG.

This sequence belongs to the metallo-dependent hydrolases superfamily. DHOase family. Class I DHOase subfamily. In terms of assembly, monomer. Forms a 1:1 stoichiometric complex with PyrB. The complex exists as an equilibrium mixture of heterohexamers, composed of 3 PyrC and 3 PyrB subunits, and dodecamers. The complex has both DHOase and ATCase activities. It depends on Zn(2+) as a cofactor.

It catalyses the reaction (S)-dihydroorotate + H2O = N-carbamoyl-L-aspartate + H(+). The protein operates within pyrimidine metabolism; UMP biosynthesis via de novo pathway; (S)-dihydroorotate from bicarbonate: step 3/3. The monomer has very low activity by itself. Activated several thousandfold by formation of a complex with PyrB aspartate carbamoyltransferase (ATCase). Functionally, catalyzes the reversible cyclization of carbamoyl aspartate to dihydroorotate. The protein is Dihydroorotase of Aquifex aeolicus (strain VF5).